We begin with the raw amino-acid sequence, 393 residues long: METFLFTSESVNEGHPDKLCDQVSDAILDACLEQDPDSKVACETCTKTNMVMVFGEITTKANVDYEKIVRSTCRSIGFVSDDVGLDADKCNVLVNIEQQSPDIAQGVHGHLTKRPEEIGAGDQGHMFGYATDETPELMPLSHVLATKLGARLTEVRKNGTCPWLRPDGKTQVTVEYFNENGAMVPIRVHTVLISTQHDETVTNDEIAADLKEHVIKPVIPEKYLDEKTIFHLNPSGRFVIGGPHGDAGLTGRKIIIDTYGGWGAHGGGAFSGKDPTKVDRSGAYIVRQAAKSIVASGLARRCIVQVSYAIGVPEPLSVFVDTYGTGKIPDKEILNIVKEKFDFRPGMIAISLDLKRGGNGRFLKTAAYGHFGRDDPDFTWEVVKPLKSEKPQQ.

Glu-9 serves as a coordination point for Mg(2+). His-15 lines the ATP pocket. Residue Glu-43 participates in K(+) binding. Glu-56 and Gln-99 together coordinate L-methionine. ATP contacts are provided by residues 167–169, 235–238, Asp-246, 252–253, Ala-269, Lys-273, and Lys-277; these read DGK, SGRF, and RK. Asp-246 lines the L-methionine pocket. Lys-277 is an L-methionine binding site.

The protein belongs to the AdoMet synthase family. As to quaternary structure, homotetramer. Requires Mn(2+) as cofactor. It depends on Mg(2+) as a cofactor. The cofactor is Co(2+). K(+) is required as a cofactor.

It is found in the cytoplasm. It catalyses the reaction L-methionine + ATP + H2O = S-adenosyl-L-methionine + phosphate + diphosphate. It functions in the pathway amino-acid biosynthesis; S-adenosyl-L-methionine biosynthesis; S-adenosyl-L-methionine from L-methionine: step 1/1. Catalyzes the formation of S-adenosylmethionine from methionine and ATP. The reaction comprises two steps that are both catalyzed by the same enzyme: formation of S-adenosylmethionine (AdoMet) and triphosphate, and subsequent hydrolysis of the triphosphate. The polypeptide is S-adenosylmethionine synthase 2 (METK2) (Populus trichocarpa (Western balsam poplar)).